We begin with the raw amino-acid sequence, 526 residues long: Bifunctional purine biosynthesis protein PurH (526 aa).

The MGS-like domain occupies 1–147 (MSSIKRALIS…KNWKHVAIVT (147 aa)).

Belongs to the PurH family.

It carries out the reaction (6R)-10-formyltetrahydrofolate + 5-amino-1-(5-phospho-beta-D-ribosyl)imidazole-4-carboxamide = 5-formamido-1-(5-phospho-D-ribosyl)imidazole-4-carboxamide + (6S)-5,6,7,8-tetrahydrofolate. The enzyme catalyses IMP + H2O = 5-formamido-1-(5-phospho-D-ribosyl)imidazole-4-carboxamide. The protein operates within purine metabolism; IMP biosynthesis via de novo pathway; 5-formamido-1-(5-phospho-D-ribosyl)imidazole-4-carboxamide from 5-amino-1-(5-phospho-D-ribosyl)imidazole-4-carboxamide (10-formyl THF route): step 1/1. It participates in purine metabolism; IMP biosynthesis via de novo pathway; IMP from 5-formamido-1-(5-phospho-D-ribosyl)imidazole-4-carboxamide: step 1/1. The sequence is that of Bifunctional purine biosynthesis protein PurH from Neisseria meningitidis serogroup B (strain ATCC BAA-335 / MC58).